Consider the following 1029-residue polypeptide: Collagen, type I, alpha 1b (1029 aa).

The disordered stretch occupies residues 1–990 (QMSYVDHSKS…KAPDPFRGGH (990 aa)). Residues 13-33 (PPQPGPMGPMGPRGPPGPPGS) are compositionally biased toward pro residues. Low complexity predominate over residues 34 to 57 (SGPQGFTGPPGEPGEPGASGAMGS). A compositionally biased stretch (basic and acidic residues) spans 67–81 (NGDDGEPGKPGRPGE). Composition is skewed to low complexity over residues 82-91 (RGAAGPQGAR), 120-129 (VPGVMGARGR), and 136-147 (SGARGNDGNTGP). Gly residues predominate over residues 163-182 (PGGAGAKGETGPAGGRGNEG). Low complexity-rich tracts occupy residues 199-223 (AGPAGSPGTDGAPGAKGSPGAAGLA), 233-267 (AQGAVGAPGPKGNNGDPGASGPKGEPGAKGEPGPA), and 299-309 (ERGAPGARGFP). Residues 310-322 (GADGGAGGKGAPG) show a composition bias toward gly residues. Composition is skewed to low complexity over residues 323–351 (ERGAPGALGAQGATGESGSPGAPGAPGSK) and 429–465 (VGAPGPSGVAGPAGEKGEQGPAGPPGFQGLPGPQGAT). The segment covering 466 to 477 (GETGKGLGGPTG) has biased composition (gly residues). Low complexity predominate over residues 478 to 497 (PRGAPGPAGNDGAKGEPGAA). Composition is skewed to gly residues over residues 498–507 (GAPGGLGAPG) and 531–540 (GGKGGDGAPG). Low complexity-rich tracts occupy residues 571–580 (VAGPTGPRGA) and 593–620 (AGFAGPPGADGQPGAKGETGDSGPKGDA). Gly residues-rich tracts occupy residues 621–630 (GAPGPGGPVG) and 645–654 (GARGGAGPPG). Low complexity-rich tracts occupy residues 655–665 (ATGFPGPAGRV), 694–722 (ETGAAGRPGEAGAAGAPGPSGEKGSPGXD), 731–743 (PQGLAGQRGLPGQ), 830–839 (APGAVGPSGK), and 855–869 (SGPAGVRGPAGPAGA). Positions 870–884 (KGDRGEAGEAGDRGG) are enriched in basic and acidic residues. Over residues 906–934 (PAGASGPAGPRGPAGSNGAPGKDGMNGLP) the composition is skewed to low complexity. Residues 952–967 (AGPPGPPGPAGPPGPP) show a composition bias toward pro residues. The 31-residue stretch at 999-1029 (TQKLPLLDLAPMDVGAPDQEFGVEVGPVCFL) folds into the Fibrillar collagen NC1 domain.

This sequence belongs to the fibrillar collagen family.

Its subcellular location is the secreted. The protein resides in the extracellular space. It localises to the extracellular matrix. The chain is Collagen, type I, alpha 1b from Epinephelus aeneus (White grouper).